The sequence spans 459 residues: Putrescine aminotransferase (459 aa).

Pyridoxal 5'-phosphate-binding positions include 150-151 (GT) and Gln274. Residue Lys300 is modified to N6-(pyridoxal phosphate)lysine. Thr332 serves as a coordination point for pyridoxal 5'-phosphate.

The protein belongs to the class-III pyridoxal-phosphate-dependent aminotransferase family. Putrescine aminotransferase subfamily. Requires pyridoxal 5'-phosphate as cofactor.

It catalyses the reaction an alkane-alpha,omega-diamine + 2-oxoglutarate = an omega-aminoaldehyde + L-glutamate. It carries out the reaction putrescine + 2-oxoglutarate = 1-pyrroline + L-glutamate + H2O. The catalysed reaction is cadaverine + 2-oxoglutarate = 5-aminopentanal + L-glutamate. The protein operates within amine and polyamine degradation; putrescine degradation; 4-aminobutanal from putrescine (transaminase route): step 1/1. Its function is as follows. Catalyzes the aminotransferase reaction from putrescine to 2-oxoglutarate, leading to glutamate and 4-aminobutanal, which spontaneously cyclizes to form 1-pyrroline. This is the first step in one of two pathways for putrescine degradation, where putrescine is converted into 4-aminobutanoate (gamma-aminobutyrate or GABA) via 4-aminobutanal. Also functions as a cadaverine transaminase in a a L-lysine degradation pathway to succinate that proceeds via cadaverine, glutarate and L-2-hydroxyglutarate. This chain is Putrescine aminotransferase, found in Escherichia coli (strain SMS-3-5 / SECEC).